A 158-amino-acid polypeptide reads, in one-letter code: NAD(P)H-quinone oxidoreductase subunit J, chloroplastic (158 aa).

It belongs to the complex I 30 kDa subunit family. In terms of assembly, NDH is composed of at least 16 different subunits, 5 of which are encoded in the nucleus.

It is found in the plastid. It localises to the chloroplast thylakoid membrane. The catalysed reaction is a plastoquinone + NADH + (n+1) H(+)(in) = a plastoquinol + NAD(+) + n H(+)(out). It catalyses the reaction a plastoquinone + NADPH + (n+1) H(+)(in) = a plastoquinol + NADP(+) + n H(+)(out). Its function is as follows. NDH shuttles electrons from NAD(P)H:plastoquinone, via FMN and iron-sulfur (Fe-S) centers, to quinones in the photosynthetic chain and possibly in a chloroplast respiratory chain. The immediate electron acceptor for the enzyme in this species is believed to be plastoquinone. Couples the redox reaction to proton translocation, and thus conserves the redox energy in a proton gradient. The polypeptide is NAD(P)H-quinone oxidoreductase subunit J, chloroplastic (Coffea arabica (Arabian coffee)).